Reading from the N-terminus, the 415-residue chain is Mitogen-activated protein kinase MPS1 (415 aa).

In terms of domain architecture, Protein kinase spans Tyr-23–Leu-314. ATP-binding positions include Leu-29–Val-37 and Lys-52. Residues Gly-363–Gln-394 form a disordered region.

This sequence belongs to the protein kinase superfamily. Ser/Thr protein kinase family. MAP kinase subfamily. As to quaternary structure, interacts with transcription factor MIG1. Interacts with transcription factor SWI6. It depends on Mg(2+) as a cofactor.

The enzyme catalyses L-seryl-[protein] + ATP = O-phospho-L-seryl-[protein] + ADP + H(+). It carries out the reaction L-threonyl-[protein] + ATP = O-phospho-L-threonyl-[protein] + ADP + H(+). Mitogen-activated protein kinase; part of the MCK1-MKK2-MPS1 MAP kinase (MAPK) signal transduction cascade that is essential for cell wall integrity and plant infection, but not for plant defense responses. Beside its role in pathogenesis, the MPS1 cascade is active in conidiation and cellular stress responses. Targets downstream of the MPS1-MAPK pathway include transcription factors MIG1 and SWI6, as well as GSK1 and MPG1. The protein is Mitogen-activated protein kinase MPS1 of Pyricularia oryzae (strain 70-15 / ATCC MYA-4617 / FGSC 8958) (Rice blast fungus).